The primary structure comprises 855 residues: MYILVWKKGQQIKTFHTLDEAAQFKAASNFDEAPMFSVTVAPAISASGGSNEATNLRRLMYLSKGTNPEECNPQFVAELARVATIRNREIGLSGFLMSSSPFLFQAIEGTDQDLDFLFAKISADPRHERCIVLANRPCTGRMSGVWHMKDSHMDSITTHDAMMTILYQIARSFSSMLTYLPKRAGNMLLSGLDPAAQPPEPKSVVVTFIYLVAYGSLLSNPYSTEQPAEVLSTFVDVCVKNLEGSGGIITKFITGICMASWPFNRTEEALTAIQQISEDLAQLPSQQAPGSSPSLMYSQAGVHYGRAMLCNAGSGKSDFTLLGDWINTTSRIATLAKKLTSPVLFSFQVRCLLGDEMREEIEGAVMDQVKGRDKPVVEYQFPGPERDVEVVGQKIEQFTPGRFRCQMRVGQYEALPISQRPPIFDDTPKCNPRPRTPGCEGRQRSHTLVDPHIMMAKLPGPSVSATGDTTVPTLTYISHATRPMSRLDLSAIMGTATRINALQRITGTLLHGNGLFVQTQEGPKEAEINLLLRIRQDTRRSDVATDHMPQPQERVYPSEWTLTSGKEEILAIFPPLQDVLSRLAKSFTAQETYVPSRVVSYLTAGNNPRELMPVSCGVVMTDICSLTSLTENSCLSEVWMICNTFIDACPSAICQEGAEVIKLIGNCVTAYFPGNNADSAVASAQELFTFCREHRQAIVDVLDVRGCVSYGVALDNGQVVMAQCGSEGLTEYVVAGAVSARVMEVEAITRGTCPRWATPLWSADRLSPQLRDHGIVPTPQAIEGLPCYGIAGEEFELDVDSIKLGIKALHAARSGEKPLTEPEEAKLDFSPGRVRHGDSGRRSNSAQGKLSIQVR.

The region spanning 56–149 (LRRLMYLSKG…GRMSGVWHMK (94 aa)) is the BLUF 1 domain. The tract at residues 420–444 (RPPIFDDTPKCNPRPRTPGCEGRQR) is disordered. Residues 471 to 563 (VPTLTYISHA…RVYPSEWTLT (93 aa)) form the BLUF 2 domain. Positions 813–827 (RSGEKPLTEPEEAKL) are enriched in basic and acidic residues. The segment at 813 to 855 (RSGEKPLTEPEEAKLDFSPGRVRHGDSGRRSNSAQGKLSIQVR) is disordered. Residues 842–855 (RSNSAQGKLSIQVR) show a composition bias toward polar residues.

In terms of assembly, heterotetramer of two alpha and two beta subunits.

It localises to the cell projection. It is found in the cilium. The protein localises to the flagellum. The polypeptide is Photoactivated adenylate cyclase subunit beta-like protein 1224-5/9F (Euglena gracilis).